Reading from the N-terminus, the 312-residue chain is Putative clathrin assembly protein At2g01920 (312 aa).

The ENTH domain maps to 21 to 152 (LITATDEKFT…ILYYNKNMIR (132 aa)).

It localises to the membrane. It is found in the clathrin-coated pit. The protein resides in the golgi apparatus. The protein localises to the cytoplasmic vesicle. Its subcellular location is the clathrin-coated vesicle. The chain is Putative clathrin assembly protein At2g01920 from Arabidopsis thaliana (Mouse-ear cress).